The primary structure comprises 134 residues: Glycine cleavage system H protein (134 aa).

The Lipoyl-binding domain occupies 24-106 (TVRVGITDYA…YGAGWLLDIQ (83 aa)). K65 is subject to N6-lipoyllysine.

The protein belongs to the GcvH family. The glycine cleavage system is composed of four proteins: P, T, L and H. (R)-lipoate is required as a cofactor.

The glycine cleavage system catalyzes the degradation of glycine. The H protein shuttles the methylamine group of glycine from the P protein to the T protein. This Mycobacterium bovis (strain ATCC BAA-935 / AF2122/97) protein is Glycine cleavage system H protein.